A 277-amino-acid polypeptide reads, in one-letter code: uncharacterized protein (277 aa).

The next 5 helical transmembrane spans lie at 46 to 66 (IAAIAAGFAIATAVIVAYGGL), 73 to 93 (LFEGFASYLAVGVLTYMILWM), 143 to 163 (TTVIGASAGAAVAITLAVLIL), 174 to 194 (FFYATSVLLAFIAAGLLGYGT), and 228 to 248 (KGLIGGILAVMFGYSASMEWV).

Belongs to the oxidase-dependent Fe transporter (OFeT) (TC 9.A.10.1) family.

It is found in the cell membrane. This is an uncharacterized protein from Archaeoglobus fulgidus (strain ATCC 49558 / DSM 4304 / JCM 9628 / NBRC 100126 / VC-16).